The following is a 94-amino-acid chain: Host-modulation protein 11K (94 aa).

As to quaternary structure, interacts with host GRB2; this interaction alters host cell environment by modulating host signaling pathways.

It is found in the host cytoplasm. Its function is as follows. Enhances viral DNA replication and virion release. Mechansitically, optimizes viral DNA replication by interacting with host GRB2 to inhibit the negative effect of ERK signaling on B19 viral replication. Plays a role in viral infectivity. Induces apoptosis of primary erythroid progenitor cells. This chain is Host-modulation protein 11K (11K), found in Human parvovirus B19 (strain HV) (HPV B19).